The sequence spans 507 residues: MVNIRPEEISSVIFRQIEQYNQEVRVFNIGTVLQVGDGIARIYGLNEVMAGELVEFEDGTVGIALNLESNNVGAVLMGDGLTIQEGSSVKATGKIAQIPVSDAYLGRVVNALAQPIDGKGQIPASESRLIESPAPGIISRRSAYEPMQTGLIAIDSMIPIGRGQRELIIGDRQTGKTAVATDTILNQKGQNVICVYVAIGQKASSVAQVVNTFEEQGAMEYTIVVAETANSPATLQYLAPYTGAALAEYFMYRQQHTLIIYDDLSKQAQAYRQMSLLLRRPPGREAYPGDVFYLHSRLLERAAKLSSQLGEGSMTALPVVETQAGDVSAYIPTNVISITDGQTFLSADSSNAGIRPAINVGISVSRVGSAAQIKAMKQVAGKLKLELAQFAELEAFAQFASDLDKATQNQLARGQRLRELLKQSQSAPLTVEEQVATIYTGVNGYSDILEIGQVKKFLVQFREYLITNKPKFAEIICSTKVFTEQAEIILKEAIEEHTELFLLQEQK.

Residue 170–177 coordinates ATP; the sequence is GDRQTGKT.

Belongs to the ATPase alpha/beta chains family. F-type ATPases have 2 components, CF(1) - the catalytic core - and CF(0) - the membrane proton channel. CF(1) has five subunits: alpha(3), beta(3), gamma(1), delta(1), epsilon(1). CF(0) has four main subunits: a, b, b' and c.

Its subcellular location is the plastid. The protein resides in the chloroplast thylakoid membrane. It catalyses the reaction ATP + H2O + 4 H(+)(in) = ADP + phosphate + 5 H(+)(out). Produces ATP from ADP in the presence of a proton gradient across the membrane. The alpha chain is a regulatory subunit. This Huperzia lucidula (Shining clubmoss) protein is ATP synthase subunit alpha, chloroplastic.